Reading from the N-terminus, the 507-residue chain is MVTIRADEISNIIRERIEQYNREVTIVNTGTVLQVGDGIARIYGLDEVMAGELVEFEEGTIGIALNLESNNVGVVLMGDGLMIQEGSSVKATGKIAQIPVSEAYLGRVINALANPIDGRGKISASESRLIESPAPGIISRRSVYEPLQTGLIAIDSMIPIGRGQRELIIGDRQTGKTAVATDTILNQQGQNVICVYVAIGQKASSVAQVVTSLQERGAMEYTIVVAETADSPATLQYLAPYTGAALAEYFMYREQHTLIIYDDLSKQAQAYRQMSLLLRRPPGREAYPGDVFYLHSRLLERAAKLSSQLGEGSMTALPIVETQSGDVSAYIPTNVISITDGQIFLSADLFNAGIRPAINVGISVSRVGSAAQIKAMKQVAGKLKLELAQFAELEAFAQFSSDLDKATQNQLARGQRLRELLKQSQSAPLTVEEQIMTIYTGTNGYLDGLEIGQVRKFLVQLRTYLKTNKPQFQEIISSTKTLTAEAESFLKEGIQEQLERFLLQEKL.

170–177 contacts ATP; that stretch reads GDRQTGKT. Thr257 carries the phosphothreonine modification.

This sequence belongs to the ATPase alpha/beta chains family. As to quaternary structure, F-type ATPases have 2 components, CF(1) - the catalytic core - and CF(0) - the membrane proton channel. CF(1) has five subunits: alpha(3), beta(3), gamma(1), delta(1), epsilon(1). CF(0) has four main subunits: a, b, b' and c.

It is found in the plastid. It localises to the chloroplast thylakoid membrane. The enzyme catalyses ATP + H2O + 4 H(+)(in) = ADP + phosphate + 5 H(+)(out). In terms of biological role, produces ATP from ADP in the presence of a proton gradient across the membrane. The alpha chain is a regulatory subunit. This is ATP synthase subunit alpha, chloroplastic from Arabis hirsuta (Hairy rock-cress).